Reading from the N-terminus, the 824-residue chain is Probable receptor-like protein kinase At5g24010 (824 aa).

The N-terminal stretch at 1 to 24 (MAFPINLTQTLLFFFCPLLHLSFA) is a signal peptide. 5 N-linked (GlcNAc...) asparagine glycosylation sites follow: Asn-6, Asn-41, Asn-204, Asn-227, and Asn-291. Over 25–406 (AFTPTDNYLI…SSEVVSGKRN (382 aa)) the chain is Extracellular. A helical membrane pass occupies residues 407–427 (VVWIVVGSVLGGFVFLSLFFL). Over 428–824 (SVLCLCRRKN…FSQLMTNAGR (397 aa)) the chain is Cytoplasmic. The segment at 440 to 467 (TRSSESTGWTPLRRFRGSSNSRTTERTV) is disordered. Polar residues predominate over residues 456 to 467 (GSSNSRTTERTV). In terms of domain architecture, Protein kinase spans 489–764 (FDRSLVIGVG…VLWNLEHVLQ (276 aa)). ATP-binding positions include 495–503 (IGVGGFGMV) and Lys-517. The active-site Proton acceptor is the Asp-613. The disordered stretch occupies residues 777–803 (DYGDVTDPRTARQGLSNGSNIERDYGD).

This sequence belongs to the protein kinase superfamily. Ser/Thr protein kinase family.

The protein resides in the membrane. In Arabidopsis thaliana (Mouse-ear cress), this protein is Probable receptor-like protein kinase At5g24010.